Consider the following 366-residue polypeptide: MQTLKVDLGERSYPIHIGEGLLDQPELLVPHIAGRQVAIISNETVAPLYLERLTRSLGQFSVISVVLPDGEAYKNWETLQLIFDGLLTARHDRRTTIIALGGGVIGDMAGFAAACYQRGVDFIQIPTTLLSQVDSSVGGKTGINHPLGKNMVGAFYQPNVVLIDTTSLNTLPSRELSAGLAEVIKYGLICDEPFLTWLEENVDRLRALDQQALTYAIERSCAAKAAVVGADERESGVRATLNLGHTFGHAIETHMGYGVWLHGEAVAAGTVMALEMSARLGWITSQERDRGIRLFQRAGLPVIPPEEMSEADFLEHMAIDKKVIDGRLRLVLLRRMGEAVVTDDYPKEVLQATLGADYRALAQLKG.

NAD(+) contacts are provided by residues 69–74 (DGEAYK), 103–107 (GVIGD), 127–128 (TT), K140, and K149. Zn(2+) contacts are provided by E182, H245, and H262.

Belongs to the sugar phosphate cyclases superfamily. Dehydroquinate synthase family. Co(2+) serves as cofactor. The cofactor is Zn(2+). Requires NAD(+) as cofactor.

Its subcellular location is the cytoplasm. It catalyses the reaction 7-phospho-2-dehydro-3-deoxy-D-arabino-heptonate = 3-dehydroquinate + phosphate. The protein operates within metabolic intermediate biosynthesis; chorismate biosynthesis; chorismate from D-erythrose 4-phosphate and phosphoenolpyruvate: step 2/7. Its function is as follows. Catalyzes the conversion of 3-deoxy-D-arabino-heptulosonate 7-phosphate (DAHP) to dehydroquinate (DHQ). The polypeptide is 3-dehydroquinate synthase (Pseudomonas fluorescens (strain ATCC BAA-477 / NRRL B-23932 / Pf-5)).